The following is a 112-amino-acid chain: Inner membrane assembly complex subunit 17 (112 aa).

A mitochondrion-targeting transit peptide spans 1–24 (MLRKLPINFAKWTVKKVPVQQKRF). The Mitochondrial matrix portion of the chain corresponds to 25-44 (NSQQKEISPHIMFYKNYARP). Residues 45–62 (LGKVTLFALATYYGLEIV) form a helical membrane-spanning segment. The Mitochondrial intermembrane segment spans residues 63 to 112 (WWKLDASEQEAIKNSKLLICESSFSLLTFRRITEFRECEIKTRDLYDPEI).

This sequence belongs to the INA17 family. Component of the inner membrane assembly (INA) complex. Interacts with a subset of F(1)F(0)-ATP synthase subunits of the F(1)-domain and the peripheral stalk.

The protein resides in the mitochondrion inner membrane. Functionally, component of the INA complex (INAC) that promotes the biogenesis of mitochondrial F(1)F(0)-ATP synthase. INAC facilitates the assembly of the peripheral stalk and promotes the assembly of the catalytic F(1)-domain with the membrane-embedded F(0)-domain. This chain is Inner membrane assembly complex subunit 17, found in Schizosaccharomyces pombe (strain 972 / ATCC 24843) (Fission yeast).